Here is a 418-residue protein sequence, read N- to C-terminus: Cell division protein FtsA (418 aa).

It belongs to the FtsA/MreB family. Self-interacts. Interacts with FtsZ.

The protein localises to the cell inner membrane. Its function is as follows. Cell division protein that is involved in the assembly of the Z ring. May serve as a membrane anchor for the Z ring. This Buchnera aphidicola subsp. Acyrthosiphon pisum (strain APS) (Acyrthosiphon pisum symbiotic bacterium) protein is Cell division protein FtsA.